The following is a 395-amino-acid chain: Endophilin-B2 (395 aa).

Residue methionine 1 is modified to N-acetylmethionine. The segment at 1–27 (MDFNMKKLASDAGIFFTRAVQFTEEKF) is membrane-binding amphipathic helix. Serine 10 is modified (phosphoserine). The 264-residue stretch at 24–287 (EEKFGQAEKT…LGRFPGTFVG (264 aa)) folds into the BAR domain. Coiled coils occupy residues 116–132 (IKVAEAEKHLGAAERDF) and 206–240 (ASALWNDEVDKAEQELRVAQTEFDRQAEVTRLLLE). An SH3 domain is found at 335 to 395 (SGTRKARVLY…VPVTYLELLS (61 aa)). Serine 395 is modified (phosphoserine).

The protein belongs to the endophilin family. Homodimer, and heterodimer with SH3GLB1.

It localises to the cytoplasm. This Bos taurus (Bovine) protein is Endophilin-B2 (SH3GLB2).